The following is a 507-amino-acid chain: GMP synthase [glutamine-hydrolyzing] (507 aa).

The Glutamine amidotransferase type-1 domain occupies 3–190 (KILVIDYGSQ…IQGICGLKGS (188 aa)). C77 serves as the catalytic Nucleophile. Residues H164 and E166 contribute to the active site. The GMPS ATP-PPase domain maps to 191-382 (WTLMDFVENK…LGLPREILYR (192 aa)). 218-224 (SGGVDSS) is a binding site for ATP.

As to quaternary structure, homodimer.

It carries out the reaction XMP + L-glutamine + ATP + H2O = GMP + L-glutamate + AMP + diphosphate + 2 H(+). Its pathway is purine metabolism; GMP biosynthesis; GMP from XMP (L-Gln route): step 1/1. Functionally, catalyzes the synthesis of GMP from XMP. The protein is GMP synthase [glutamine-hydrolyzing] of Petrotoga mobilis (strain DSM 10674 / SJ95).